A 218-amino-acid polypeptide reads, in one-letter code: Redox-sensing transcriptional repressor Rex (218 aa).

Residues 25-64 constitute a DNA-binding region (H-T-H motif); the sequence is WYLSYVQLLHADGCESVSSTRIARAVGVDASLVAKDLSYV. 99 to 104 is a binding site for NAD(+); it reads GVGSLG.

This sequence belongs to the transcriptional regulatory Rex family. As to quaternary structure, homodimer.

It localises to the cytoplasm. Functionally, modulates transcription in response to changes in cellular NADH/NAD(+) redox state. The protein is Redox-sensing transcriptional repressor Rex of Porphyromonas gingivalis (strain ATCC BAA-308 / W83).